The sequence spans 293 residues: Forkhead box protein N5 (293 aa).

The disordered stretch occupies residues 104–152; it reads TSPPLQLQRQLSNDYSTVEDSEDEAPTSCSDVLTDDDDSYNPWQPKHKR. A compositionally biased stretch (polar residues) spans 106-119; sequence PPLQLQRQLSNDYS. The segment at residues 176 to 273 is a DNA-binding region (fork-head); the sequence is RPPLNYCNLI…NEMHALSDDL (98 aa).

It is found in the nucleus. The chain is Forkhead box protein N5 from Xenopus tropicalis (Western clawed frog).